A 310-amino-acid polypeptide reads, in one-letter code: Aspartate carbamoyltransferase catalytic subunit 2 (310 aa).

Carbamoyl phosphate contacts are provided by R55 and T56. Residue K85 participates in L-aspartate binding. R106, H134, and Q137 together coordinate carbamoyl phosphate. The L-aspartate site is built by R167 and R228. Residues L266 and P267 each contribute to the carbamoyl phosphate site.

This sequence belongs to the aspartate/ornithine carbamoyltransferase superfamily. ATCase family. In terms of assembly, heterododecamer (2C3:3R2) of six catalytic PyrB chains organized as two trimers (C3), and six regulatory PyrI chains organized as three dimers (R2).

The enzyme catalyses carbamoyl phosphate + L-aspartate = N-carbamoyl-L-aspartate + phosphate + H(+). It functions in the pathway pyrimidine metabolism; UMP biosynthesis via de novo pathway; (S)-dihydroorotate from bicarbonate: step 2/3. In terms of biological role, catalyzes the condensation of carbamoyl phosphate and aspartate to form carbamoyl aspartate and inorganic phosphate, the committed step in the de novo pyrimidine nucleotide biosynthesis pathway. This Shewanella halifaxensis (strain HAW-EB4) protein is Aspartate carbamoyltransferase catalytic subunit 2.